A 65-amino-acid polypeptide reads, in one-letter code: Conotoxin Lp5.1 (65 aa).

The N-terminal stretch at M1–A22 is a signal peptide. The propeptide occupies Q23–R50.

The protein belongs to the conotoxin T superfamily. Post-translationally, contains 2 disulfide bonds that can be either 'C1-C3, C2-C4' or 'C1-C4, C2-C3', since these disulfide connectivities have been observed for conotoxins with cysteine framework V (for examples, see AC P0DQQ7 and AC P81755). As to expression, expressed by the venom duct.

The protein localises to the secreted. The sequence is that of Conotoxin Lp5.1 from Conus leopardus (Leopard cone).